Consider the following 619-residue polypeptide: Probable Xaa-Pro aminopeptidase P (619 aa).

Mn(2+) contacts are provided by D416, D427, E525, and E539.

Belongs to the peptidase M24B family. It depends on Mn(2+) as a cofactor.

It catalyses the reaction Release of any N-terminal amino acid, including proline, that is linked to proline, even from a dipeptide or tripeptide.. Catalyzes the removal of a penultimate prolyl residue from the N-termini of peptides. The polypeptide is Probable Xaa-Pro aminopeptidase P (AMPP) (Tuber melanosporum (strain Mel28) (Perigord black truffle)).